The following is a 73-amino-acid chain: UPF0346 protein SSP1318 (73 aa).

Belongs to the UPF0346 family.

This Staphylococcus saprophyticus subsp. saprophyticus (strain ATCC 15305 / DSM 20229 / NCIMB 8711 / NCTC 7292 / S-41) protein is UPF0346 protein SSP1318.